Reading from the N-terminus, the 862-residue chain is Kinesin-like protein KIN-7E (862 aa).

The Kinesin motor domain occupies 24-346 (KILVLVRLRP…LLFACCAKEV (323 aa)). Position 110-117 (110-117 (GQTSSGKT)) interacts with ATP. Positions 355 to 428 (VMSDKALVKQ…RLEDFMKMVE (74 aa)) form a coiled coil. Disordered stretches follow at residues 463–505 (RTSF…QSEE) and 542–632 (ANGE…TPLV). A compositionally biased stretch (polar residues) spans 465–476 (SFISDGTSTPLS). Residues 494–505 (MSPRHSGDQSEE) show a composition bias toward basic and acidic residues. Residues 612–621 (DSMTSRGSDS) show a composition bias toward polar residues. K734 participates in a covalent cross-link: Glycyl lysine isopeptide (Lys-Gly) (interchain with G-Cter in ubiquitin).

This sequence belongs to the TRAFAC class myosin-kinesin ATPase superfamily. Kinesin family. KIN-7 subfamily.

The protein is Kinesin-like protein KIN-7E of Arabidopsis thaliana (Mouse-ear cress).